A 584-amino-acid polypeptide reads, in one-letter code: 2-succinyl-5-enolpyruvyl-6-hydroxy-3-cyclohexene-1-carboxylate synthase (584 aa).

Belongs to the TPP enzyme family. MenD subfamily. Homodimer. Requires Mg(2+) as cofactor. It depends on Mn(2+) as a cofactor. Thiamine diphosphate is required as a cofactor.

It carries out the reaction isochorismate + 2-oxoglutarate + H(+) = 5-enolpyruvoyl-6-hydroxy-2-succinyl-cyclohex-3-ene-1-carboxylate + CO2. It functions in the pathway quinol/quinone metabolism; 1,4-dihydroxy-2-naphthoate biosynthesis; 1,4-dihydroxy-2-naphthoate from chorismate: step 2/7. It participates in quinol/quinone metabolism; menaquinone biosynthesis. Catalyzes the thiamine diphosphate-dependent decarboxylation of 2-oxoglutarate and the subsequent addition of the resulting succinic semialdehyde-thiamine pyrophosphate anion to isochorismate to yield 2-succinyl-5-enolpyruvyl-6-hydroxy-3-cyclohexene-1-carboxylate (SEPHCHC). This chain is 2-succinyl-5-enolpyruvyl-6-hydroxy-3-cyclohexene-1-carboxylate synthase, found in Bacillus thuringiensis subsp. konkukian (strain 97-27).